A 169-amino-acid chain; its full sequence is SsrA-binding protein (169 aa).

Belongs to the SmpB family.

It localises to the cytoplasm. Required for rescue of stalled ribosomes mediated by trans-translation. Binds to transfer-messenger RNA (tmRNA), required for stable association of tmRNA with ribosomes. tmRNA and SmpB together mimic tRNA shape, replacing the anticodon stem-loop with SmpB. tmRNA is encoded by the ssrA gene; the 2 termini fold to resemble tRNA(Ala) and it encodes a 'tag peptide', a short internal open reading frame. During trans-translation Ala-aminoacylated tmRNA acts like a tRNA, entering the A-site of stalled ribosomes, displacing the stalled mRNA. The ribosome then switches to translate the ORF on the tmRNA; the nascent peptide is terminated with the 'tag peptide' encoded by the tmRNA and targeted for degradation. The ribosome is freed to recommence translation, which seems to be the essential function of trans-translation. This Mycolicibacterium paratuberculosis (strain ATCC BAA-968 / K-10) (Mycobacterium paratuberculosis) protein is SsrA-binding protein.